Consider the following 406-residue polypeptide: Arginine biosynthesis bifunctional protein ArgJ (406 aa).

Substrate contacts are provided by threonine 156, lysine 182, threonine 193, glutamate 279, asparagine 401, and threonine 406. Threonine 193 (nucleophile) is an active-site residue.

The protein belongs to the ArgJ family. In terms of assembly, heterotetramer of two alpha and two beta chains.

It is found in the cytoplasm. The enzyme catalyses N(2)-acetyl-L-ornithine + L-glutamate = N-acetyl-L-glutamate + L-ornithine. The catalysed reaction is L-glutamate + acetyl-CoA = N-acetyl-L-glutamate + CoA + H(+). It participates in amino-acid biosynthesis; L-arginine biosynthesis; L-ornithine and N-acetyl-L-glutamate from L-glutamate and N(2)-acetyl-L-ornithine (cyclic): step 1/1. The protein operates within amino-acid biosynthesis; L-arginine biosynthesis; N(2)-acetyl-L-ornithine from L-glutamate: step 1/4. Feedback inhibition by L-arginine. In terms of biological role, catalyzes two activities which are involved in the cyclic version of arginine biosynthesis: the synthesis of N-acetylglutamate from glutamate and acetyl-CoA as the acetyl donor, and of ornithine by transacetylation between N(2)-acetylornithine and glutamate. The chain is Arginine biosynthesis bifunctional protein ArgJ from Bacillus amyloliquefaciens (Bacillus velezensis).